The chain runs to 355 residues: Peptide chain release factor 1 (355 aa).

Q233 carries the post-translational modification N5-methylglutamine.

The protein belongs to the prokaryotic/mitochondrial release factor family. Methylated by PrmC. Methylation increases the termination efficiency of RF1.

The protein localises to the cytoplasm. Peptide chain release factor 1 directs the termination of translation in response to the peptide chain termination codons UAG and UAA. This Rickettsia typhi (strain ATCC VR-144 / Wilmington) protein is Peptide chain release factor 1.